We begin with the raw amino-acid sequence, 506 residues long: Anaerobic nitric oxide reductase transcription regulator NorR (506 aa).

D57 is subject to 4-aspartylphosphate. Positions 187–416 (MIGLSPAMTQ…LEHAIHRAVV (230 aa)) constitute a Sigma-54 factor interaction domain. ATP contacts are provided by residues 215–222 (GETGTGKE) and 278–287 (ADNGTLFLDE). The H-T-H motif DNA-binding region spans 481 to 500 (WAASARALETDVANLHRLAK).

Its pathway is nitrogen metabolism; nitric oxide reduction. Functionally, required for the expression of anaerobic nitric oxide (NO) reductase, acts as a transcriptional activator for at least the norVW operon. Activation also requires sigma-54. The protein is Anaerobic nitric oxide reductase transcription regulator NorR of Salmonella paratyphi C (strain RKS4594).